The following is a 175-amino-acid chain: NADH-ubiquinone oxidoreductase chain 6 (175 aa).

The next 5 helical transmembrane spans lie at 1–21 (MMMYIVFILSIIFVISFVGVS), 25–45 (SPIYGGLGLIVGGGVGCGVIL), 47–67 (FGGSFLGLMVFLIYLGGMLVV), 88–108 (VVLGAFVLGLVVEFLIVIYAL), and 149–169 (YGVWLVIVTGWSLFISVVIIM).

The protein belongs to the complex I subunit 6 family. As to quaternary structure, core subunit of respiratory chain NADH dehydrogenase (Complex I) which is composed of 45 different subunits.

It is found in the mitochondrion inner membrane. The catalysed reaction is a ubiquinone + NADH + 5 H(+)(in) = a ubiquinol + NAD(+) + 4 H(+)(out). Its function is as follows. Core subunit of the mitochondrial membrane respiratory chain NADH dehydrogenase (Complex I) which catalyzes electron transfer from NADH through the respiratory chain, using ubiquinone as an electron acceptor. Essential for the catalytic activity and assembly of complex I. This Balaenoptera physalus (Fin whale) protein is NADH-ubiquinone oxidoreductase chain 6 (MT-ND6).